We begin with the raw amino-acid sequence, 223 residues long: Protein-lysine N-methyltransferase CG9154 (223 aa).

This sequence belongs to the class I-like SAM-binding methyltransferase superfamily. EFM5 family.

Its subcellular location is the cytoplasm. Its function is as follows. S-adenosyl-L-methionine-dependent protein-lysine N-methyltransferase that methylates elongation factor 1-alpha. The polypeptide is Protein-lysine N-methyltransferase CG9154 (Drosophila melanogaster (Fruit fly)).